We begin with the raw amino-acid sequence, 455 residues long: UDP-N-acetylmuramoylalanine--D-glutamate ligase (455 aa).

112 to 118 is an ATP binding site; that stretch reads GTNGKTT.

This sequence belongs to the MurCDEF family.

Its subcellular location is the cytoplasm. It catalyses the reaction UDP-N-acetyl-alpha-D-muramoyl-L-alanine + D-glutamate + ATP = UDP-N-acetyl-alpha-D-muramoyl-L-alanyl-D-glutamate + ADP + phosphate + H(+). It participates in cell wall biogenesis; peptidoglycan biosynthesis. Its function is as follows. Cell wall formation. Catalyzes the addition of glutamate to the nucleotide precursor UDP-N-acetylmuramoyl-L-alanine (UMA). The sequence is that of UDP-N-acetylmuramoylalanine--D-glutamate ligase from Trichormus variabilis (strain ATCC 29413 / PCC 7937) (Anabaena variabilis).